A 168-amino-acid chain; its full sequence is Vasopressin-neurophysin 2-copeptin (168 aa).

Residues 1-23 (MLAMMLNTTLSACFLSLLALTSA) form the signal peptide. The cysteines at positions 24 and 29 are disulfide-linked. At glycine 32 the chain carries Glycine amide. 7 disulfides stabilise this stretch: cysteine 45/cysteine 89, cysteine 48/cysteine 62, cysteine 56/cysteine 79, cysteine 63/cysteine 69, cysteine 96/cysteine 108, cysteine 102/cysteine 120, and cysteine 109/cysteine 114. Asparagine 135 carries an N-linked (GlcNAc...) asparagine glycan.

The protein belongs to the vasopressin/oxytocin family. In terms of assembly, interacts with vasopressin receptors V1bR/AVPR1B (Ki=85 pM), V1aR/AVPR1A (Ki=0.6 nM) and V2R/AVPR2 (Ki=4.9 nM). Interacts with oxytocin receptor (OXTR) (Ki=110 nM).

It localises to the secreted. Neurophysin 2 specifically binds vasopressin. In terms of biological role, vasopressin has a direct antidiuretic action on the kidney, it also causes vasoconstriction of the peripheral vessels. Acts by binding to vasopressin receptors (V1bR/AVPR1B, V1aR/AVPR1A, and V2R/AVPR2). In Rattus norvegicus (Rat), this protein is Vasopressin-neurophysin 2-copeptin (Avp).